The primary structure comprises 120 residues: Putative pterin-4-alpha-carbinolamine dehydratase (120 aa).

This sequence belongs to the pterin-4-alpha-carbinolamine dehydratase family.

The catalysed reaction is (4aS,6R)-4a-hydroxy-L-erythro-5,6,7,8-tetrahydrobiopterin = (6R)-L-erythro-6,7-dihydrobiopterin + H2O. The protein is Putative pterin-4-alpha-carbinolamine dehydratase of Saccharomyces cerevisiae (strain ATCC 204508 / S288c) (Baker's yeast).